We begin with the raw amino-acid sequence, 324 residues long: Quinolinate synthase (324 aa).

Residues histidine 39 and serine 56 each coordinate iminosuccinate. Cysteine 101 is a [4Fe-4S] cluster binding site. Iminosuccinate contacts are provided by residues 127 to 129 (YIN) and serine 144. A [4Fe-4S] cluster-binding site is contributed by cysteine 187. Iminosuccinate is bound by residues 213–215 (HPE) and threonine 230. Position 280 (cysteine 280) interacts with [4Fe-4S] cluster.

It belongs to the quinolinate synthase family. Type 2 subfamily. [4Fe-4S] cluster is required as a cofactor.

It is found in the cytoplasm. The enzyme catalyses iminosuccinate + dihydroxyacetone phosphate = quinolinate + phosphate + 2 H2O + H(+). It functions in the pathway cofactor biosynthesis; NAD(+) biosynthesis; quinolinate from iminoaspartate: step 1/1. In terms of biological role, catalyzes the condensation of iminoaspartate with dihydroxyacetone phosphate to form quinolinate. This Nostoc sp. (strain PCC 7120 / SAG 25.82 / UTEX 2576) protein is Quinolinate synthase.